The sequence spans 409 residues: Arginine deiminase (409 aa).

The active-site Amidino-cysteine intermediate is the Cys399.

The protein belongs to the arginine deiminase family.

It is found in the cytoplasm. The catalysed reaction is L-arginine + H2O = L-citrulline + NH4(+). It participates in amino-acid degradation; L-arginine degradation via ADI pathway; carbamoyl phosphate from L-arginine: step 1/2. In Borreliella afzelii (Borrelia afzelii), this protein is Arginine deiminase (arcA).